The following is a 259-amino-acid chain: PKHD-type hydroxylase PsycPRwf_1523 (259 aa).

The region spanning 80 to 180 is the Fe2OG dioxygenase domain; sequence VIMPPLFSAY…RLAMVTWVQS (101 aa). Fe cation contacts are provided by His-98, Asp-100, and His-161. Arg-171 lines the 2-oxoglutarate pocket.

Requires Fe(2+) as cofactor. The cofactor is L-ascorbate.

This chain is PKHD-type hydroxylase PsycPRwf_1523, found in Psychrobacter sp. (strain PRwf-1).